A 184-amino-acid polypeptide reads, in one-letter code: Dual-action ribosomal maturation protein DarP (184 aa).

A disordered region spans residues 1–27 (MSIPDTEIPVDDDGYDENGYDRPSKSQ). Over residues 8 to 18 (IPVDDDGYDEN) the composition is skewed to acidic residues.

This sequence belongs to the DarP family.

It is found in the cytoplasm. Functionally, member of a network of 50S ribosomal subunit biogenesis factors which assembles along the 30S-50S interface, preventing incorrect 23S rRNA structures from forming. Promotes peptidyl transferase center (PTC) maturation. The polypeptide is Dual-action ribosomal maturation protein DarP (Bordetella avium (strain 197N)).